Consider the following 228-residue polypeptide: MKKKAVILLSGGPDSTTVLEIVSKTDYEIYALSFNYHRRNSLEVQKIQGLIKDYNVKQHRVINIDLQSFIGSALTDDNIDVPKFKNTDQLPSDIPVTYVPARNTIFLSYALGVAEVIGARDIFIGVHTNDYTNYPDCRPEYIKSFEAMANLATRVGVNGEKITIHAPLINMTKEQIIKKGLELGVDYSKTISCYDPTEDGLSCGQCLSCIARLDAFKRNNVQDPIKYV.

9-19 (LSGGPDSTTVL) contacts ATP. Zn(2+)-binding residues include C193, C203, C206, and C209.

The protein belongs to the QueC family. Zn(2+) is required as a cofactor.

The catalysed reaction is 7-carboxy-7-deazaguanine + NH4(+) + ATP = 7-cyano-7-deazaguanine + ADP + phosphate + H2O + H(+). The protein operates within purine metabolism; 7-cyano-7-deazaguanine biosynthesis. Its function is as follows. Catalyzes the ATP-dependent conversion of 7-carboxy-7-deazaguanine (CDG) to 7-cyano-7-deazaguanine (preQ(0)). This Rickettsia africae (strain ESF-5) protein is 7-cyano-7-deazaguanine synthase.